We begin with the raw amino-acid sequence, 253 residues long: Phosphoglycerate mutase 2 (253 aa).

Phosphothreonine is present on threonine 3. Substrate is bound by residues 10 to 17, 23 to 24, arginine 62, 89 to 92, lysine 100, and 116 to 117; these read RHGESTWN, CG, ERHY, and RR. Residue histidine 11 is the Tele-phosphohistidine intermediate of the active site. Position 14 is a phosphoserine (serine 14). Glutamate 89 serves as the catalytic Proton donor/acceptor. Residue serine 118 is modified to Phosphoserine. Phosphotyrosine occurs at positions 132 and 133. Serine 135 bears the Phosphoserine mark. At threonine 152 the chain carries Phosphothreonine. Residue 187 to 188 coordinates substrate; it reads GN.

It belongs to the phosphoglycerate mutase family. BPG-dependent PGAM subfamily. As to quaternary structure, homodimer.

It carries out the reaction (2R)-2-phosphoglycerate = (2R)-3-phosphoglycerate. The enzyme catalyses (2R)-3-phospho-glyceroyl phosphate = (2R)-2,3-bisphosphoglycerate + H(+). Functionally, interconversion of 3- and 2-phosphoglycerate with 2,3-bisphosphoglycerate as the primer of the reaction. Can also catalyze the reaction of EC 5.4.2.4 (synthase), but with a reduced activity. The polypeptide is Phosphoglycerate mutase 2 (PGAM2) (Bos taurus (Bovine)).